The primary structure comprises 130 residues: Probable 4-amino-4-deoxy-L-arabinose-phosphoundecaprenol flippase subunit ArnF (130 aa).

The Cytoplasmic portion of the chain corresponds to 1-4 (MRGY). The chain crosses the membrane as a helical span at residues 5–25 (AWGAASVLLVTLAQLLMKWGM). The Periplasmic portion of the chain corresponds to 26-47 (AQIPLMSFADVTLNLFMQYWLP). Residues 48-68 (LVVVSGGIFGYALSMLCWFFA) form a helical membrane-spanning segment. Residues 69 to 77 (LHHLPLNRA) lie on the Cytoplasmic side of the membrane. A helical transmembrane segment spans residues 78–98 (YPLLSVSYALVYLAAVILPWF). Residue Asn99 is a topological domain, periplasmic. The chain crosses the membrane as a helical span at residues 100–120 (ESATLLKTLGTLFILFGVWLI). At 121–130 (NSQAKVKTPQ) the chain is on the cytoplasmic side.

It belongs to the ArnF family. In terms of assembly, heterodimer of ArnE and ArnF.

It is found in the cell inner membrane. Its pathway is bacterial outer membrane biogenesis; lipopolysaccharide biosynthesis. Its function is as follows. Translocates 4-amino-4-deoxy-L-arabinose-phosphoundecaprenol (alpha-L-Ara4N-phosphoundecaprenol) from the cytoplasmic to the periplasmic side of the inner membrane. This Serratia proteamaculans (strain 568) protein is Probable 4-amino-4-deoxy-L-arabinose-phosphoundecaprenol flippase subunit ArnF.